Here is a 98-residue protein sequence, read N- to C-terminus: DNA-binding protein Fis (98 aa).

A DNA-binding region (H-T-H motif) is located at residues 74-93 (QTKAANMMGINRGTLRKKLK).

Belongs to the transcriptional regulatory Fis family. Homodimer.

Functionally, activates ribosomal RNA transcription. Plays a direct role in upstream activation of rRNA promoters. This is DNA-binding protein Fis from Aliivibrio fischeri (strain ATCC 700601 / ES114) (Vibrio fischeri).